The following is a 256-amino-acid chain: Expansin-like B1 (256 aa).

The first 24 residues, 1–24 (MAQLLRRHLPVILSLILFLSKATA), serve as a signal peptide directing secretion. Asn-27 carries an N-linked (GlcNAc...) asparagine glycan. The Expansin-like EG45 domain maps to 46–150 (NGACEYGAFG…RRVSCTYPNK (105 aa)). The region spanning 164 to 249 (NYLEFEIWYQ…NWTAGATYDS (86 aa)) is the Expansin-like CBD domain. 2 N-linked (GlcNAc...) asparagine glycosylation sites follow: Asn-189 and Asn-240.

The protein belongs to the expansin family. Expansin-like B subfamily.

It is found in the secreted. This is Expansin-like B1 (EXLB1) from Oryza sativa subsp. japonica (Rice).